Here is a 121-residue protein sequence, read N- to C-terminus: Small ribosomal subunit protein uS13 (121 aa).

A disordered region spans residues 97-121 (VRGQRTRTNARTRRGARKTVAGKKK). Basic residues predominate over residues 100–121 (QRTRTNARTRRGARKTVAGKKK).

The protein belongs to the universal ribosomal protein uS13 family. As to quaternary structure, part of the 30S ribosomal subunit. Forms a loose heterodimer with protein S19. Forms two bridges to the 50S subunit in the 70S ribosome.

In terms of biological role, located at the top of the head of the 30S subunit, it contacts several helices of the 16S rRNA. In the 70S ribosome it contacts the 23S rRNA (bridge B1a) and protein L5 of the 50S subunit (bridge B1b), connecting the 2 subunits; these bridges are implicated in subunit movement. Contacts the tRNAs in the A and P-sites. The chain is Small ribosomal subunit protein uS13 from Prochlorococcus marinus (strain MIT 9313).